The sequence spans 612 residues: UvrABC system protein C (612 aa).

The GIY-YIG domain occupies 20–98 (THSGVYRMLD…IKQHRPKYNI (79 aa)). The UVR domain maps to 208–243 (SSVLEEISAKMYQASEDMEYEKAQVYRDQLVVLRKL).

The protein belongs to the UvrC family. In terms of assembly, interacts with UvrB in an incision complex.

The protein resides in the cytoplasm. Functionally, the UvrABC repair system catalyzes the recognition and processing of DNA lesions. UvrC both incises the 5' and 3' sides of the lesion. The N-terminal half is responsible for the 3' incision and the C-terminal half is responsible for the 5' incision. This Francisella tularensis subsp. holarctica (strain FTNF002-00 / FTA) protein is UvrABC system protein C.